The primary structure comprises 130 residues: Small ribosomal subunit protein uS11c (130 aa).

The protein belongs to the universal ribosomal protein uS11 family. In terms of assembly, part of the 30S ribosomal subunit.

The protein localises to the plastid. The protein resides in the chloroplast. The sequence is that of Small ribosomal subunit protein uS11c from Pinus thunbergii (Japanese black pine).